A 445-amino-acid chain; its full sequence is MSRQKALIVDDEPDIRELLEITLGRMKLDTRSARNVKEARELLAREPFDLCLTDMRLPDGSGLDLVQYIQQRHPQTPVAMITAYGSLDTAIQALKAGAFDFLTKPVDLGRLRELVATALRLRNPEAEEAPVDNRLLGESPPMRALRNQIGKLARSQAPVYISGESGSGKELVARLIHEQGPRIERPFVPVNCGAIPSELMESEFFGHKKGSFTGAIEDKQGLFQAASGGTLFLDEVADLPMAMQVKLLRAIQEKAVRAVGGQQEVAVDVRILCATHKDLAAEVGAGRFRQDLYYRLNVIELRVPPLRERREDIPLLAERILKRLAGDTGLPAARLTGDAQEKLKNYRFPGNVRELENMLERAYTLCEDDQIQPHDLRLADAPGASQEGAASLSEIDNLEDYLEDIERKLIMQALEETRWNRTAAAQRLGLTFRSMRYRLKKLGID.

The Response regulatory domain occupies 5–119 (KALIVDDEPD…RLRELVATAL (115 aa)). 2 positions are modified to 4-aspartylphosphate: Asp-11 and Asp-54. A Sigma-54 factor interaction domain is found at 135–364 (LLGESPPMRA…LENMLERAYT (230 aa)). Residues 163-170 (GESGSGKE) and 226-235 (ASGGTLFLDE) each bind ATP. A DNA-binding region (H-T-H motif) is located at residues 418 to 437 (RWNRTAAAQRLGLTFRSMRY).

Phosphorylated by PilS.

The protein localises to the cytoplasm. Its function is as follows. Member of the two-component regulatory system PilS/PilR that regulates the expression of multiple genes including the type IV pilus (T4P) major subunit PilA. Thereby, plays a major role in the regulation of multiple motility pathways. Upon appropriate environmental signals, the histidine kinase PilS transfers the phosphoryl group onto PilR. In turn, PilR functions as a transcriptional activator by direct binding to a cis-acting sequence upstream of the pilin gene promoter leading to its activation. This is Response regulator protein PilR (pilR) from Pseudomonas aeruginosa (strain ATCC 15692 / DSM 22644 / CIP 104116 / JCM 14847 / LMG 12228 / 1C / PRS 101 / PAO1).